Here is a 228-residue protein sequence, read N- to C-terminus: Ribose-5-phosphate isomerase A (228 aa).

Substrate-binding positions include 29–32, 85–88, and 98–101; these read TGST, DGAD, and KGGG. Glutamate 107 serves as the catalytic Proton acceptor. Lysine 125 contacts substrate.

This sequence belongs to the ribose 5-phosphate isomerase family. Homodimer.

It carries out the reaction aldehydo-D-ribose 5-phosphate = D-ribulose 5-phosphate. The protein operates within carbohydrate degradation; pentose phosphate pathway; D-ribose 5-phosphate from D-ribulose 5-phosphate (non-oxidative stage): step 1/1. Functionally, catalyzes the reversible conversion of ribose-5-phosphate to ribulose 5-phosphate. The protein is Ribose-5-phosphate isomerase A of Staphylococcus aureus (strain MRSA252).